The primary structure comprises 443 residues: tRNA modification GTPase MnmE (443 aa).

Arg23, Glu81, and Lys119 together coordinate (6S)-5-formyl-5,6,7,8-tetrahydrofolate. In terms of domain architecture, TrmE-type G spans 214 to 369; the sequence is GMRVAILGKP…LLSALKERAI (156 aa). GTP contacts are provided by residues 224 to 229, 243 to 249, and 268 to 271; these read NVGKST, SEYPGTT, and DTAG. Residues Ser228 and Thr249 each contribute to the Mg(2+) site. Lys443 is a (6S)-5-formyl-5,6,7,8-tetrahydrofolate binding site.

The protein belongs to the TRAFAC class TrmE-Era-EngA-EngB-Septin-like GTPase superfamily. TrmE GTPase family. As to quaternary structure, homodimer. Heterotetramer of two MnmE and two MnmG subunits. K(+) is required as a cofactor.

It localises to the cytoplasm. Functionally, exhibits a very high intrinsic GTPase hydrolysis rate. Involved in the addition of a carboxymethylaminomethyl (cmnm) group at the wobble position (U34) of certain tRNAs, forming tRNA-cmnm(5)s(2)U34. The polypeptide is tRNA modification GTPase MnmE (Anaplasma marginale (strain St. Maries)).